The chain runs to 398 residues: Streptopain (398 aa).

The first 27 residues, 1–27, serve as a signal peptide directing secretion; the sequence is MNKKKLGVRLLSLLALGGFVLANPVFA. A propeptide spanning residues 28–145 is cleaved from the precursor; that stretch reads DQNFARNEKE…TTYAGTAEIK (118 aa). Cysteine 192 (nucleophile) is an active-site residue. Cysteine 192 carries the cysteine methyl disulfide; in zymogen form modification. A protein is bound by residues serine 282 and glycine 339. The Proton acceptor role is filled by histidine 340. Residues 368–390 are C-terminal active site loop; that stretch reads RLDALNPSALGTGGGAGGFNGYQ.

This sequence belongs to the peptidase C10 family. In terms of assembly, monomer. In terms of processing, the mature protease is derived from the precursor sequence by cleavage, either in cis via an autocatalytic mechanism, or in trans by mature SpeB or host proteases (trypsin, plasmin or subtilisin). Maturation can involve a number of protein cleavage intermediates. Mature SpeB probably plays the most important role in protein maturation in physiological conditions. Methylthiolation at Cys-192 of the inactive zymogen form is probably involved in the mechanism of secretion of the proteinase into the culture fluid.

It localises to the secreted. Its subcellular location is the host extracellular space. The protein localises to the host cytoplasm. It carries out the reaction Preferential cleavage with hydrophobic residues at P2, P1 and P1'.. With respect to regulation, synthesized as an inactive zymogen to protect the intracellular components of the bacteria from proteolytic activity during protein production. Once secreted into the extracellular milieu, cleaved into the active protease: maturation can be mediated in cis by autocatalytic cleavage, or in trans by mature SpeB or host proteases. Protease activity is strongly inhibited by zinc and copper, which prevent its maturation into an active protease: inhibition by metal ions may be required to prevent proteolysis of streptococcal proteins. In terms of biological role, cysteine protease that acts as a key streptococcal virulence factor by cleaving host proteins involved in immune response. Triggers inflammation by mediating cleavage of host proteins, which can both promote host pathogenesis by triggering sterile inflammation and/or restrict streptococcal infection, depending on host immune statue and infection site. Cleaves host gasdermin-A (GSDMA) in epithelial cells, promoting GSDMA activation and formation of gasdermin pores, triggering pyroptosis. Pyroptosis triggers the elimination of the infected skin cell, depriving the pathogen of its protective niche, while inducing an inflammatory response. This ultimately prevents bacterial penetration of the epithelial barrier and a subsequent systemic dissemination of the pathogen. Also mediates cleavage of the cytokine precursor interleukin-1 beta (IL1B) to its mature form, resulting in inflammation and septic shock. SpeB-mediated maturation of IL1B plays a dual role depending on infection site: while IL1B inflammatory response prevents bacterial growth during invasive skin infections, it promotes streptococcal infection of the nasopharynx by disrupting colonization resistance mediated by the microbiota. Inhibits host autophagy be catalyzing cleavage and inactivation of key autophagy factors, such as CALCOCO2, NBR1 and SQSTM1. Cleaves and inhibits a number of complement factors, such as C2, C3-beta chain of C3, C4, C5 or SERPING1, thereby promoting evasion of host immunity. May also impair adaptive immunity by catalyzing cleavage and degradation of host immunoglobulins to promote immune system evasion; the relevance of this activity is however unsure in vivo. Catalyzes maturation and release of the peptide hormone bradykinin from the precursor Kininogen-1 (KNG1) to produce hypotension during septic shock. Also involved in bacterial translocation across the host epithelial barrier by mediating cleavage and degradation of host epithelial junction proteins, such as CDH1 and OCLN. Additionally, has been involved in degradation of fibronectin and vitronectin, two host extracellular matrix proteins involved in tissue integrity. Also able to catalyze cleavage and degradation of streptococcal proteins, such as C5a peptidase, EndoS or SmeZ. Degradation of streptococcal proteins is however strictly regulated to preserve integrity of other virulence factors. The polypeptide is Streptopain (Streptococcus pyogenes serotype M1).